We begin with the raw amino-acid sequence, 689 residues long: Glycine--tRNA ligase beta subunit (689 aa).

Belongs to the class-II aminoacyl-tRNA synthetase family. As to quaternary structure, tetramer of two alpha and two beta subunits.

The protein localises to the cytoplasm. The catalysed reaction is tRNA(Gly) + glycine + ATP = glycyl-tRNA(Gly) + AMP + diphosphate. The sequence is that of Glycine--tRNA ligase beta subunit from Shewanella amazonensis (strain ATCC BAA-1098 / SB2B).